The sequence spans 934 residues: Bifunctional uridylyltransferase/uridylyl-removing enzyme (934 aa).

The uridylyltransferase stretch occupies residues 1–379 (MSAHDLKLEE…TFSRRKRKLS (379 aa)). The tract at residues 380 to 736 (DDGAFISENH…AKPHAFEAVT (357 aa)) is uridylyl-removing. The HD domain occupies 496–613 (VDEHLLRCIA…IDFADTVQTM (118 aa)). ACT domains are found at residues 737–818 (EITV…DMLA) and 848–931 (VIEV…RSPQ).

Belongs to the GlnD family. The cofactor is Mg(2+).

The catalysed reaction is [protein-PII]-L-tyrosine + UTP = [protein-PII]-uridylyl-L-tyrosine + diphosphate. It carries out the reaction [protein-PII]-uridylyl-L-tyrosine + H2O = [protein-PII]-L-tyrosine + UMP + H(+). Its activity is regulated as follows. Uridylyltransferase (UTase) activity is inhibited by glutamine, while glutamine activates uridylyl-removing (UR) activity. In terms of biological role, modifies, by uridylylation and deuridylylation, the PII regulatory proteins (GlnB and homologs), in response to the nitrogen status of the cell that GlnD senses through the glutamine level. Under low glutamine levels, catalyzes the conversion of the PII proteins and UTP to PII-UMP and PPi, while under higher glutamine levels, GlnD hydrolyzes PII-UMP to PII and UMP (deuridylylation). Thus, controls uridylylation state and activity of the PII proteins, and plays an important role in the regulation of nitrogen assimilation and metabolism. The polypeptide is Bifunctional uridylyltransferase/uridylyl-removing enzyme (Brucella melitensis biotype 2 (strain ATCC 23457)).